Reading from the N-terminus, the 62-residue chain is Pro-MCH variant (62 aa).

The interval 23-41 (GSVAFPAENGVQDTESTQE) is NGE-like. The tract at residues 28–62 (PAENGVQDTESTQEKRETGDEENSAQFPIGRRDFD) is disordered. The interval 44-56 (ETGDEENSAQFPI) is NEI-like. The tract at residues 60 to 62 (DFD) is melanin-concentrating hormone-like.

This sequence belongs to the melanin-concentrating hormone family.

This is Pro-MCH variant (PMCHL1) from Hylobates lar (Lar gibbon).